The primary structure comprises 313 residues: Protein ABA AND ROS SENSITIVE 1 (313 aa).

A Nuclear localization signal 1 motif is present at residues 5–12 (AKKKAMFR). A C2H2-type zinc finger spans residues 39–61 (CRVCNVVLKSESLWDVHQASRKH). Over residues 115 to 131 (ARAEVEPAKSKNLEQSK) the composition is skewed to basic and acidic residues. Disordered regions lie at residues 115 to 189 (ARAE…LPTG), 232 to 254 (MEEEEVDAAETIEEEEQREQRSY), and 271 to 313 (ARLA…AQHL). Over residues 155-176 (TDSSNTKTTSEPKQSQTQTTGP) the composition is skewed to polar residues. Residues 232–248 (MEEEEVDAAETIEEEEQ) are compositionally biased toward acidic residues. Positions 232-271 (MEEEEVDAAETIEEEEQREQRSYKEKVEILKRKKMELKAA) form a coiled coil. The Nuclear localization signal 2 signature appears at 274–281 (AKRSKTSE). Acidic residues predominate over residues 293–305 (ESPSDEEDDEDSA).

As to expression, mostly expressed in siliques and, to a lower extent, in roots. Barely deteclable in leaves and stems.

It localises to the nucleus. It is found in the cytoplasm. Functionally, essential for breaking seed dormancy before seed germination. Prevents reactive oxygen species (ROS) accumulation in response to abscisic acid (ABA) and oxidative stress, probably by repressing the accumulation of ABA-induced ROS-scavenging enzymes (e.g. CSD3). The polypeptide is Protein ABA AND ROS SENSITIVE 1 (Arabidopsis thaliana (Mouse-ear cress)).